The chain runs to 455 residues: tRNA-2-methylthio-N(6)-dimethylallyladenosine synthase (455 aa).

Residues 10 to 130 (RKVFIKTYGC…LPDALKRVRR (121 aa)) form the MTTase N-terminal domain. The [4Fe-4S] cluster site is built by Cys-19, Cys-55, Cys-93, Cys-171, Cys-175, and Cys-178. Residues 157–389 (RSRGVTAFLT…QALLLRQQKE (233 aa)) enclose the Radical SAM core domain. The TRAM domain maps to 392-454 (ESLVGKTMDV…PNSLFAEVAG (63 aa)).

The protein belongs to the methylthiotransferase family. MiaB subfamily. As to quaternary structure, monomer. Requires [4Fe-4S] cluster as cofactor.

The protein resides in the cytoplasm. The enzyme catalyses N(6)-dimethylallyladenosine(37) in tRNA + (sulfur carrier)-SH + AH2 + 2 S-adenosyl-L-methionine = 2-methylsulfanyl-N(6)-dimethylallyladenosine(37) in tRNA + (sulfur carrier)-H + 5'-deoxyadenosine + L-methionine + A + S-adenosyl-L-homocysteine + 2 H(+). Functionally, catalyzes the methylthiolation of N6-(dimethylallyl)adenosine (i(6)A), leading to the formation of 2-methylthio-N6-(dimethylallyl)adenosine (ms(2)i(6)A) at position 37 in tRNAs that read codons beginning with uridine. In Agrobacterium fabrum (strain C58 / ATCC 33970) (Agrobacterium tumefaciens (strain C58)), this protein is tRNA-2-methylthio-N(6)-dimethylallyladenosine synthase.